The sequence spans 212 residues: Orotate phosphoribosyltransferase (212 aa).

Residues R97, K101, H103, and 123 to 131 (DDLISTGGS) contribute to the 5-phospho-alpha-D-ribose 1-diphosphate site. Residue S127 participates in orotate binding.

Belongs to the purine/pyrimidine phosphoribosyltransferase family. PyrE subfamily. As to quaternary structure, homodimer. Requires Mg(2+) as cofactor.

It carries out the reaction orotidine 5'-phosphate + diphosphate = orotate + 5-phospho-alpha-D-ribose 1-diphosphate. Its pathway is pyrimidine metabolism; UMP biosynthesis via de novo pathway; UMP from orotate: step 1/2. Catalyzes the transfer of a ribosyl phosphate group from 5-phosphoribose 1-diphosphate to orotate, leading to the formation of orotidine monophosphate (OMP). The polypeptide is Orotate phosphoribosyltransferase (Lactiplantibacillus plantarum (strain ATCC BAA-793 / NCIMB 8826 / WCFS1) (Lactobacillus plantarum)).